The following is a 267-amino-acid chain: Phosphate import ATP-binding protein PstB (267 aa).

An ABC transporter domain is found at 12 to 251 (VSLDNVSIRY…EFDKTKNMFN (240 aa)). Residue 44-51 (GPSGCGKS) coordinates ATP.

This sequence belongs to the ABC transporter superfamily. Phosphate importer (TC 3.A.1.7) family. As to quaternary structure, the complex is composed of two ATP-binding proteins (PstB), two transmembrane proteins (PstC and PstA) and a solute-binding protein (PstS).

It localises to the cell inner membrane. It catalyses the reaction phosphate(out) + ATP + H2O = ADP + 2 phosphate(in) + H(+). Its function is as follows. Part of the ABC transporter complex PstSACB involved in phosphate import. Responsible for energy coupling to the transport system. This Prochlorococcus marinus (strain NATL2A) protein is Phosphate import ATP-binding protein PstB.